We begin with the raw amino-acid sequence, 812 residues long: ATP-dependent zinc metalloprotease FtsH (812 aa).

The Cytoplasmic portion of the chain corresponds to 1 to 21; it reads MPPSPPRPPKFPGSGRPESPN. Residues 22-42 form a helical membrane-spanning segment; sequence WGVWVMVLLIVGVLAFGFFTP. The Extracellular portion of the chain corresponds to 43 to 241; that stretch reads ESFGLGPRKE…TKFKRESGSW (199 aa). Residues 242-262 form a helical membrane-spanning segment; the sequence is GGILLNLLPIVLILVILFFMF. Over 263-812 the chain is Cytoplasmic; sequence RAQSGGARGA…EFGKDGGEKK (550 aa). 333 to 340 lines the ATP pocket; the sequence is GAPGTGKT. His-555 contributes to the Zn(2+) binding site. Glu-556 is an active-site residue. Zn(2+)-binding residues include His-559 and Asp-631. A disordered region spans residues 739-812; it reads KNPPARVTPP…EFGKDGGEKK (74 aa). Basic and acidic residues-rich tracts occupy residues 757–785 and 803–812; these read QPGKDDSGHNEKKEAEETRADGAEERKME and EFGKDGGEKK.

The protein in the central section; belongs to the AAA ATPase family. It in the C-terminal section; belongs to the peptidase M41 family. Homohexamer. The cofactor is Zn(2+).

It localises to the cell membrane. Its function is as follows. Acts as a processive, ATP-dependent zinc metallopeptidase for both cytoplasmic and membrane proteins. Plays a role in the quality control of integral membrane proteins. This Akkermansia muciniphila (strain ATCC BAA-835 / DSM 22959 / JCM 33894 / BCRC 81048 / CCUG 64013 / CIP 107961 / Muc) protein is ATP-dependent zinc metalloprotease FtsH.